The sequence spans 148 residues: Large ribosomal subunit protein bL19 (148 aa).

This sequence belongs to the bacterial ribosomal protein bL19 family.

In terms of biological role, this protein is located at the 30S-50S ribosomal subunit interface and may play a role in the structure and function of the aminoacyl-tRNA binding site. The chain is Large ribosomal subunit protein bL19 from Paramagnetospirillum magneticum (strain ATCC 700264 / AMB-1) (Magnetospirillum magneticum).